Here is a 342-residue protein sequence, read N- to C-terminus: Cell division protein ZipA (342 aa).

Residues 1–6 (MEDLQL) are Periplasmic-facing. A helical transmembrane segment spans residues 7 to 27 (VLFILGAIAIVAVLVHGFWSI). Over 28-342 (RRQQPKSLKD…DYLHRIRANA (315 aa)) the chain is Cytoplasmic. A disordered region spans residues 33 to 57 (KSLKDSPMGNFYKQQADKESPPKRV). Residues 47 to 57 (QADKESPPKRV) show a composition bias toward basic and acidic residues.

Belongs to the ZipA family. Interacts with FtsZ via their C-terminal domains.

It localises to the cell inner membrane. Its function is as follows. Essential cell division protein that stabilizes the FtsZ protofilaments by cross-linking them and that serves as a cytoplasmic membrane anchor for the Z ring. Also required for the recruitment to the septal ring of downstream cell division proteins. This Shewanella sp. (strain W3-18-1) protein is Cell division protein ZipA.